We begin with the raw amino-acid sequence, 512 residues long: Protein arginine N-methyltransferase 2 (512 aa).

The disordered stretch occupies residues 67 to 103; that stretch reads TSNIDDLPLPPPIQEVEEEEPTQQNIEQQQQTQDESD. Residues 88 to 99 show a composition bias toward low complexity; it reads TQQNIEQQQQTQ. Positions 120–508 constitute an SAM-dependent MTase PRMT-type domain; that stretch reads DEEYFSSYSK…KTNPFDYSYQ (389 aa). Residues His133, Arg142, Gly166, and Glu217 each contribute to the S-adenosyl-L-methionine site. Catalysis depends on residues Glu231 and Glu240. The tract at residues 375–395 is disordered; that stretch reads DDDDNDNNNNNNDNSNDDENK.

The protein belongs to the class I-like SAM-binding methyltransferase superfamily. Protein arginine N-methyltransferase family.

It is found in the cytoplasm. The protein resides in the nucleus. It catalyses the reaction L-arginyl-[protein] + 2 S-adenosyl-L-methionine = N(omega),N(omega)-dimethyl-L-arginyl-[protein] + 2 S-adenosyl-L-homocysteine + 2 H(+). Functionally, arginine methyltransferase that methylates the guanidino nitrogens of arginyl residues in some proteins such as histones. This is Protein arginine N-methyltransferase 2 (prmt2) from Dictyostelium discoideum (Social amoeba).